A 505-amino-acid chain; its full sequence is UDP-N-acetylmuramate--L-alanine ligase (505 aa).

164-170 provides a ligand contact to ATP; it reads GTHGKTT.

Belongs to the MurCDEF family.

The protein resides in the cytoplasm. It catalyses the reaction UDP-N-acetyl-alpha-D-muramate + L-alanine + ATP = UDP-N-acetyl-alpha-D-muramoyl-L-alanine + ADP + phosphate + H(+). It functions in the pathway cell wall biogenesis; peptidoglycan biosynthesis. Its function is as follows. Cell wall formation. The chain is UDP-N-acetylmuramate--L-alanine ligase from Synechocystis sp. (strain ATCC 27184 / PCC 6803 / Kazusa).